The chain runs to 370 residues: Chaperone protein DnaJ (370 aa).

Residues 5-69 (DYYEVLGVDR…QKKAHYDQFG (65 aa)) form the J domain. Residues 128-210 (GKETTIEIPR…CGGKGKVRKR (83 aa)) form a CR-type zinc finger. Positions 141, 144, 158, 161, 184, 187, 198, and 201 each coordinate Zn(2+). CXXCXGXG motif repeat units follow at residues 141–148 (CHTCSGSG), 158–165 (CPHCGGSG), 184–191 (CHHCEGTG), and 198–205 (CATCGGKG).

It belongs to the DnaJ family. Homodimer. Zn(2+) is required as a cofactor.

The protein localises to the cytoplasm. Its function is as follows. Participates actively in the response to hyperosmotic and heat shock by preventing the aggregation of stress-denatured proteins and by disaggregating proteins, also in an autonomous, DnaK-independent fashion. Unfolded proteins bind initially to DnaJ; upon interaction with the DnaJ-bound protein, DnaK hydrolyzes its bound ATP, resulting in the formation of a stable complex. GrpE releases ADP from DnaK; ATP binding to DnaK triggers the release of the substrate protein, thus completing the reaction cycle. Several rounds of ATP-dependent interactions between DnaJ, DnaK and GrpE are required for fully efficient folding. Also involved, together with DnaK and GrpE, in the DNA replication of plasmids through activation of initiation proteins. The chain is Chaperone protein DnaJ from Halalkalibacterium halodurans (strain ATCC BAA-125 / DSM 18197 / FERM 7344 / JCM 9153 / C-125) (Bacillus halodurans).